Consider the following 501-residue polypeptide: Ribose import ATP-binding protein RbsA (501 aa).

ABC transporter domains lie at 6–242 (LQLS…VGRK) and 253–495 (KHGE…VGKK). Residue 38–45 (GENGAGKS) participates in ATP binding.

Belongs to the ABC transporter superfamily. Ribose importer (TC 3.A.1.2.1) family. The complex is composed of an ATP-binding protein (RbsA), two transmembrane proteins (RbsC) and a solute-binding protein (RbsB).

It localises to the cell inner membrane. The catalysed reaction is D-ribose(out) + ATP + H2O = D-ribose(in) + ADP + phosphate + H(+). Its function is as follows. Part of the ABC transporter complex RbsABC involved in ribose import. Responsible for energy coupling to the transport system. In Vibrio parahaemolyticus serotype O3:K6 (strain RIMD 2210633), this protein is Ribose import ATP-binding protein RbsA.